Reading from the N-terminus, the 785-residue chain is Semaphorin-3F (785 aa).

Residues 1–18 form the signal peptide; it reads MLVAGLLLWASLLTGAWP. Residues 31-545 enclose the Sema domain; that stretch reads RVRLSFKELK…SAVGVTHLSL (515 aa). N-linked (GlcNAc...) asparagine glycosylation is present at Asn-53. A disulfide bond links Cys-104 and Cys-115. Residue Asn-126 is glycosylated (N-linked (GlcNAc...) asparagine). 5 cysteine pairs are disulfide-bonded: Cys-133/Cys-142, Cys-300/Cys-412, Cys-324/Cys-372, Cys-548/Cys-566, and Cys-678/Cys-746. One can recognise an Ig-like C2-type domain in the interval 605-690; that stretch reads ANKNAVESVQ…TENNFKHVVT (86 aa). Positions 752 to 785 are disordered; it reads HVPPSPREAPGAPRSPEPQDQKKPRNRRHHPPDT. Basic residues predominate over residues 775-785; the sequence is PRNRRHHPPDT.

Belongs to the semaphorin family. Expressed abundantly but differentially in a variety of neural and nonneural tissues. There is high expression in mammary gland, kidney, fetal brain, and lung and lower expression in heart and liver.

The protein resides in the secreted. Functionally, may play a role in cell motility and cell adhesion. This is Semaphorin-3F (SEMA3F) from Homo sapiens (Human).